A 126-amino-acid chain; its full sequence is Holo-[acyl-carrier-protein] synthase (126 aa).

D9 and E58 together coordinate Mg(2+).

This sequence belongs to the P-Pant transferase superfamily. AcpS family. Requires Mg(2+) as cofactor.

The protein resides in the cytoplasm. It carries out the reaction apo-[ACP] + CoA = holo-[ACP] + adenosine 3',5'-bisphosphate + H(+). Functionally, transfers the 4'-phosphopantetheine moiety from coenzyme A to a Ser of acyl-carrier-protein. This is Holo-[acyl-carrier-protein] synthase from Erwinia tasmaniensis (strain DSM 17950 / CFBP 7177 / CIP 109463 / NCPPB 4357 / Et1/99).